Reading from the N-terminus, the 24-residue chain is 47 kDa cell wall protein (24 aa).

It localises to the secreted. The protein resides in the cell wall. The chain is 47 kDa cell wall protein from Nicotiana tabacum (Common tobacco).